The chain runs to 855 residues: Sucrose synthase 5 (855 aa).

The GT-B glycosyltransferase stretch occupies residues 279 to 758 (SIFNIVIFSI…GLQRICECYT (480 aa)).

It belongs to the glycosyltransferase 1 family. Plant sucrose synthase subfamily. In terms of tissue distribution, predominantly expressed in roots, flowers and immature seeds.

The protein resides in the cytoplasm. Its subcellular location is the membrane. The catalysed reaction is an NDP-alpha-D-glucose + D-fructose = a ribonucleoside 5'-diphosphate + sucrose + H(+). Its function is as follows. Sucrose-cleaving enzyme that provides UDP-glucose and fructose for various metabolic pathways. The sequence is that of Sucrose synthase 5 (SUS5) from Oryza sativa subsp. japonica (Rice).